A 372-amino-acid chain; its full sequence is Alanine racemase (372 aa).

The active-site Proton acceptor; specific for D-alanine is Lys-37. Lys-37 carries the N6-(pyridoxal phosphate)lysine modification. Arg-136 contributes to the substrate binding site. Residue Tyr-265 is the Proton acceptor; specific for L-alanine of the active site. Met-313 contributes to the substrate binding site.

The protein belongs to the alanine racemase family. Requires pyridoxal 5'-phosphate as cofactor.

The enzyme catalyses L-alanine = D-alanine. It participates in amino-acid biosynthesis; D-alanine biosynthesis; D-alanine from L-alanine: step 1/1. In terms of biological role, catalyzes the interconversion of L-alanine and D-alanine. May also act on other amino acids. The sequence is that of Alanine racemase (alr) from Synechocystis sp. (strain ATCC 27184 / PCC 6803 / Kazusa).